The sequence spans 507 residues: WD repeat-containing protein fzy-1 (507 aa).

2 disordered regions span residues 1-39 and 74-95; these read MNNKGRTPGSAGRTVRSSAQQNGLTMRKRDMTPTRNTNL and NKENLNNSMSEPNSPEKKSVEG. 2 stretches are compositionally biased toward polar residues: residues 15–24 and 74–86; these read VRSSAQQNGL and NKENLNNSMSEPN. 4 WD repeats span residues 219–258, 313–352, 364–406, and 411–450; these read TNEGLITSVRWSQEGRYISLGYASGAVKIYDPNRPKTTEY, GHCRDVTALEWSADENMCVSGSSDRTAKIWDGRHVRGSTV, EHTG…QKVR, and CETGGVGGIVFNRPYSEMLTASDDGFLRIYRFNANYKLSH.

This sequence belongs to the WD repeat CDC20/Fizzy family.

The protein localises to the chromosome. It is found in the cytoplasm. In terms of biological role, plays a role in metaphase-anaphase transition during meiosis I. Required for embryonic anterior-posterior axis formation. In Caenorhabditis elegans, this protein is WD repeat-containing protein fzy-1.